The following is a 295-amino-acid chain: Pyridoxal 5'-phosphate synthase subunit PdxS (295 aa).

Asp25 is a binding site for D-ribose 5-phosphate. Lys82 (schiff-base intermediate with D-ribose 5-phosphate) is an active-site residue. Position 154 (Gly154) interacts with D-ribose 5-phosphate. Residue Arg166 participates in D-glyceraldehyde 3-phosphate binding. Residues Gly215 and 236 to 237 (GS) contribute to the D-ribose 5-phosphate site.

The protein belongs to the PdxS/SNZ family. In terms of assembly, in the presence of PdxT, forms a dodecamer of heterodimers.

It catalyses the reaction aldehydo-D-ribose 5-phosphate + D-glyceraldehyde 3-phosphate + L-glutamine = pyridoxal 5'-phosphate + L-glutamate + phosphate + 3 H2O + H(+). It participates in cofactor biosynthesis; pyridoxal 5'-phosphate biosynthesis. In terms of biological role, catalyzes the formation of pyridoxal 5'-phosphate from ribose 5-phosphate (RBP), glyceraldehyde 3-phosphate (G3P) and ammonia. The ammonia is provided by the PdxT subunit. Can also use ribulose 5-phosphate and dihydroxyacetone phosphate as substrates, resulting from enzyme-catalyzed isomerization of RBP and G3P, respectively. In Staphylococcus haemolyticus (strain JCSC1435), this protein is Pyridoxal 5'-phosphate synthase subunit PdxS.